A 475-amino-acid chain; its full sequence is MKIPLNIGLIHFVGIGGIGMSGIAEVLHNLGYKIQGSDQANNTNIERLRSKGINVHIGHQAKNLGEAEVVVISTAIKKTNPEYIAAKEKHLPVVKRAEMLAELMRFRQAIAIGGTHGKTTTTSMVAALLDAGNFDPMVINGGIINAYGTNARMGNGNWMVVEADESDGTFLKLPADIVVVTNIDSEHLDHYGSFDAVRESFRQFVENVPFYGFAVMCLDHPEVQTLASRIDDRWVITYGANPQADVRFLNFSMKNKKAHFDVLIRSRKTGIQTELRDLVLPMSGKHNVSNATAAIAIAHELGISDEVIRKGLAEFGGVKRRFTQTGSWRGIDVFDDYGHHPVEIKAVLRAARESTNGQVIAIAQPHRYSRLCNLFDDFTTCFNDADTIMIAPVYAAGEEPITGFGSKELVEHIQMASHCDVRLIDDLEDVVSIVSTVAKSGDYVVFLGAGSITQWAYALPKRLAELDNNDEFSAN.

114–120 serves as a coordination point for ATP; the sequence is GTHGKTT.

Belongs to the MurCDEF family.

Its subcellular location is the cytoplasm. It carries out the reaction UDP-N-acetyl-alpha-D-muramate + L-alanine + ATP = UDP-N-acetyl-alpha-D-muramoyl-L-alanine + ADP + phosphate + H(+). Its pathway is cell wall biogenesis; peptidoglycan biosynthesis. Cell wall formation. This chain is UDP-N-acetylmuramate--L-alanine ligase, found in Bartonella bacilliformis (strain ATCC 35685 / KC583 / Herrer 020/F12,63).